The chain runs to 120 residues: Dihydroneopterin aldolase (120 aa).

2 residues coordinate substrate: Glu-20 and Met-114.

This sequence belongs to the archaeal dihydroneopterin aldolase family. Homotetramer.

The catalysed reaction is 7,8-dihydroneopterin = 6-hydroxymethyl-7,8-dihydropterin + glycolaldehyde. In terms of biological role, catalyzes the conversion of 7,8-dihydroneopterin (H2Neo) to 6-hydroxymethyl-7,8-dihydropterin (6-HMD). The protein is Dihydroneopterin aldolase of Picrophilus torridus (strain ATCC 700027 / DSM 9790 / JCM 10055 / NBRC 100828 / KAW 2/3).